An 89-amino-acid polypeptide reads, in one-letter code: DNA-directed RNA polymerase subunit omega (89 aa).

It belongs to the RNA polymerase subunit omega family. As to quaternary structure, the RNAP catalytic core consists of 2 alpha, 1 beta, 1 beta' and 1 omega subunit. When a sigma factor is associated with the core the holoenzyme is formed, which can initiate transcription.

It carries out the reaction RNA(n) + a ribonucleoside 5'-triphosphate = RNA(n+1) + diphosphate. In terms of biological role, promotes RNA polymerase assembly. Latches the N- and C-terminal regions of the beta' subunit thereby facilitating its interaction with the beta and alpha subunits. The sequence is that of DNA-directed RNA polymerase subunit omega from Idiomarina loihiensis (strain ATCC BAA-735 / DSM 15497 / L2-TR).